The primary structure comprises 371 residues: 4-hydroxybutyrate dehydrogenase (371 aa).

NAD(+) contacts are provided by residues 88–92 (GSVID), 126–130 (TTCGT), and Lys148. Fe cation is bound by residues Asp182, His186, His253, and His267. NAD(+) is bound at residue His267.

The protein belongs to the iron-containing alcohol dehydrogenase family. Homodimer. It depends on Fe(2+) as a cofactor. The cofactor is Cu(2+).

It carries out the reaction 4-hydroxybutanoate + NAD(+) = succinate semialdehyde + NADH + H(+). With respect to regulation, inactivated by oxygen. Involved in the anaerobic succinate degradation pathway. Catalyzes the interconversion of gamma-hydroxybutyrate (GHB) and succinic semialdehyde (SSA). The chain is 4-hydroxybutyrate dehydrogenase from Clostridium kluyveri (strain ATCC 8527 / DSM 555 / NBRC 12016 / NCIMB 10680 / K1).